Consider the following 601-residue polypeptide: Leucine zipper putative tumor suppressor 1 (601 aa).

G2 carries the N-myristoyl glycine lipid modification. The tract at residues 135–190 (GAILHSSPESTNHQLHPMPPDKPKEQELKPGLCSGALSDSGRNSMSSLPTHSTTSS) is disordered. Residues 153 to 162 (PPDKPKEQEL) are compositionally biased toward basic and acidic residues. Residues 174–190 (SGRNSMSSLPTHSTTSS) are compositionally biased toward polar residues. Residues 255–573 (PLSTDECTIQ…RLEKALQQLA (319 aa)) adopt a coiled-coil conformation.

Belongs to the LZTS family. In terms of assembly, binds EEF1G, TLK2 and CDK1. Phosphorylated on serine residues. Hyperphosphorylated by the cAMP-dependent kinase PKA during cell-cycle progression. In terms of tissue distribution, highly expressed in brain, in particular in cortex, the CA2 region of the hippocampus, olfactory bulb, striatum and pons. Not detectable in the other tissues tested.

The protein resides in the cytoplasm. It localises to the cell membrane. The protein localises to the cell projection. Its subcellular location is the dendritic spine. It is found in the postsynaptic density. The protein resides in the synapse. Its function is as follows. Involved in the regulation of cell growth. May stabilize the active CDC2-cyclin B1 complex and thereby contribute to the regulation of the cell cycle and the prevention of uncontrolled cell proliferation. May act as tumor suppressor. The sequence is that of Leucine zipper putative tumor suppressor 1 (Lzts1) from Rattus norvegicus (Rat).